Consider the following 926-residue polypeptide: Periplasmic nitrate reductase (926 aa).

A signal peptide (tat-type signal) is located at residues 1 to 30 (MNRRDFIKSAAASAACASAGIAIPANLSAA). Residues 37-93 (WRWDKAACRFCGTGCGIMVATKEGKIVAVKGDPEAPVNRGLNCIKGYFNAKIMYGED) form the 4Fe-4S Mo/W bis-MGD-type domain. Residues C44, C47, C51, and C79 each coordinate [4Fe-4S] cluster. Residues K81, Q149, N174, C178, 211-218 (WGANMAEM), M419, Q423, N529, 554-555 (SD), K577, D604, and 816-825 (TGRVLEHWHS) each bind Mo-bis(molybdopterin guanine dinucleotide). A substrate-binding site is contributed by W892. The Mo-bis(molybdopterin guanine dinucleotide) site is built by N900 and K917.

The protein belongs to the prokaryotic molybdopterin-containing oxidoreductase family. NasA/NapA/NarB subfamily. As to quaternary structure, component of the periplasmic nitrate reductase NapAB complex composed of NapA and NapB. [4Fe-4S] cluster serves as cofactor. It depends on Mo-bis(molybdopterin guanine dinucleotide) as a cofactor. In terms of processing, predicted to be exported by the Tat system. The position of the signal peptide cleavage has not been experimentally proven.

Its subcellular location is the periplasm. It carries out the reaction 2 Fe(II)-[cytochrome] + nitrate + 2 H(+) = 2 Fe(III)-[cytochrome] + nitrite + H2O. Functionally, catalytic subunit of the periplasmic nitrate reductase complex NapAB. Receives electrons from NapB and catalyzes the reduction of nitrate to nitrite. The sequence is that of Periplasmic nitrate reductase from Campylobacter curvus (strain 525.92).